The chain runs to 352 residues: 4-hydroxy-3-methylbut-2-en-1-yl diphosphate synthase (flavodoxin) (352 aa).

Cys-263, Cys-266, Cys-298, and Glu-305 together coordinate [4Fe-4S] cluster.

Belongs to the IspG family. Requires [4Fe-4S] cluster as cofactor.

It catalyses the reaction (2E)-4-hydroxy-3-methylbut-2-enyl diphosphate + oxidized [flavodoxin] + H2O + 2 H(+) = 2-C-methyl-D-erythritol 2,4-cyclic diphosphate + reduced [flavodoxin]. Its pathway is isoprenoid biosynthesis; isopentenyl diphosphate biosynthesis via DXP pathway; isopentenyl diphosphate from 1-deoxy-D-xylulose 5-phosphate: step 5/6. Functionally, converts 2C-methyl-D-erythritol 2,4-cyclodiphosphate (ME-2,4cPP) into 1-hydroxy-2-methyl-2-(E)-butenyl 4-diphosphate. The chain is 4-hydroxy-3-methylbut-2-en-1-yl diphosphate synthase (flavodoxin) from Sulfurimonas denitrificans (strain ATCC 33889 / DSM 1251) (Thiomicrospira denitrificans (strain ATCC 33889 / DSM 1251)).